The chain runs to 127 residues: Aspartate 1-decarboxylase (127 aa).

The active-site Schiff-base intermediate with substrate; via pyruvic acid is the Ser25. Residue Ser25 is modified to Pyruvic acid (Ser). Residue Thr57 participates in substrate binding. Tyr58 (proton donor) is an active-site residue. Position 73–75 (73–75 (GAA)) interacts with substrate.

It belongs to the PanD family. In terms of assembly, heterooctamer of four alpha and four beta subunits. Pyruvate serves as cofactor. In terms of processing, is synthesized initially as an inactive proenzyme, which is activated by self-cleavage at a specific serine bond to produce a beta-subunit with a hydroxyl group at its C-terminus and an alpha-subunit with a pyruvoyl group at its N-terminus.

The protein resides in the cytoplasm. The catalysed reaction is L-aspartate + H(+) = beta-alanine + CO2. It participates in cofactor biosynthesis; (R)-pantothenate biosynthesis; beta-alanine from L-aspartate: step 1/1. Its function is as follows. Catalyzes the pyruvoyl-dependent decarboxylation of aspartate to produce beta-alanine. The sequence is that of Aspartate 1-decarboxylase from Listeria innocua serovar 6a (strain ATCC BAA-680 / CLIP 11262).